A 621-amino-acid chain; its full sequence is tRNA uridine 5-carboxymethylaminomethyl modification enzyme MnmG (621 aa).

FAD is bound at residue 8–13 (GAGHAG). Residue 269-283 (GPRYCPSVEDKIFRF) participates in NAD(+) binding.

It belongs to the MnmG family. Homodimer. Heterotetramer of two MnmE and two MnmG subunits. FAD is required as a cofactor.

The protein localises to the cytoplasm. Functionally, NAD-binding protein involved in the addition of a carboxymethylaminomethyl (cmnm) group at the wobble position (U34) of certain tRNAs, forming tRNA-cmnm(5)s(2)U34. The chain is tRNA uridine 5-carboxymethylaminomethyl modification enzyme MnmG from Chlorobium chlorochromatii (strain CaD3).